The chain runs to 299 residues: Fructose-1,6-bisphosphatase class 1 (299 aa).

The Mg(2+) site is built by Glu-79, Asp-98, Leu-100, and Asp-101. Substrate-binding positions include 101 to 104 (DGSS), Tyr-207, and Lys-238. Glu-244 contacts Mg(2+).

This sequence belongs to the FBPase class 1 family. Homotetramer. Requires Mg(2+) as cofactor.

Its subcellular location is the cytoplasm. It carries out the reaction beta-D-fructose 1,6-bisphosphate + H2O = beta-D-fructose 6-phosphate + phosphate. The protein operates within carbohydrate biosynthesis; gluconeogenesis. The protein is Fructose-1,6-bisphosphatase class 1 of Campylobacter curvus (strain 525.92).